The sequence spans 280 residues: Energy-coupling factor transporter ATP-binding protein EcfA1 (280 aa).

Positions 6–241 (LRTENISFQY…SHMLQEIGLD (236 aa)) constitute an ABC transporter domain. Residue 40-47 (GQNGSGKS) coordinates ATP.

This sequence belongs to the ABC transporter superfamily. Energy-coupling factor EcfA family. Forms a stable energy-coupling factor (ECF) transporter complex composed of 2 membrane-embedded substrate-binding proteins (S component), 2 ATP-binding proteins (A component) and 2 transmembrane proteins (T component).

It is found in the cell membrane. In terms of biological role, ATP-binding (A) component of a common energy-coupling factor (ECF) ABC-transporter complex. Unlike classic ABC transporters this ECF transporter provides the energy necessary to transport a number of different substrates. The protein is Energy-coupling factor transporter ATP-binding protein EcfA1 of Bacillus cereus (strain ATCC 10987 / NRS 248).